A 117-amino-acid chain; its full sequence is Ribonuclease P protein component (117 aa).

Belongs to the RnpA family. In terms of assembly, consists of a catalytic RNA component (M1 or rnpB) and a protein subunit.

It carries out the reaction Endonucleolytic cleavage of RNA, removing 5'-extranucleotides from tRNA precursor.. Functionally, RNaseP catalyzes the removal of the 5'-leader sequence from pre-tRNA to produce the mature 5'-terminus. It can also cleave other RNA substrates such as 4.5S RNA. The protein component plays an auxiliary but essential role in vivo by binding to the 5'-leader sequence and broadening the substrate specificity of the ribozyme. This is Ribonuclease P protein component from Staphylococcus aureus (strain MW2).